Reading from the N-terminus, the 511-residue chain is Probable G-protein coupled receptor 152 (511 aa).

The interval 1–20 is disordered; that stretch reads MDTAVEANLGAAGHGPRTEL. Residues 1–33 are Extracellular-facing; that stretch reads MDTAVEANLGAAGHGPRTELSDEDYYPQGSWDT. A helical membrane pass occupies residues 34-54; it reads VFLVALLLLGLPANGLMAWLA. Topologically, residues 55 to 65 are cytoplasmic; that stretch reads GSQARHGAGTR. Residues 66-86 traverse the membrane as a helical segment; the sequence is LALLLLSLALSDFLFLAAATF. At 87-105 the chain is on the extracellular side; sequence QILEIQHGGHWPLGTAACR. Cys-104 and Cys-182 are joined by a disulfide. The helical transmembrane segment at 106 to 126 threads the bilayer; sequence FYYFLWGVSYSSGLFLLTALS. Over 127 to 148 the chain is Cytoplasmic; it reads LDRCLLALCPRWYPGHRPARLP. A helical membrane pass occupies residues 149 to 169; sequence LWVCAGVWVLATLFSVPWLVF. The Extracellular segment spans residues 170-194; the sequence is PEAAVWWYDLVICLDFWDTEELPLR. The chain crosses the membrane as a helical span at residues 195-215; that stretch reads MLEILGGFLPFLLLLVCHVLT. At 216 to 258 the chain is on the cytoplasmic side; sequence QATACRTCCGHQPRRMACHGFARVAKTILSAYVVLRLPYQLAQ. The helical transmembrane segment at 259–279 threads the bilayer; sequence LLYLAFLWDVYPGYLLWEALV. Residues 280–282 lie on the Extracellular side of the membrane; the sequence is YSD. A helical membrane pass occupies residues 283–303; the sequence is YLILLNSCLSPFLCLAASADL. At 304–511 the chain is on the cytoplasmic side; the sequence is RALLRTVLSS…PEEAPSAGPT (208 aa). 3 disordered regions span residues 328-349, 361-386, and 407-511; these read PAEPQTLPGPTSEGQSRLDSVV, SDSVVQPEVSPSAQPQSDSVAQPTVG, and PQLD…AGPT. 2 stretches are compositionally biased toward polar residues: residues 335-345 and 369-386; these read PGPTSEGQSRL and VSPSAQPQSDSVAQPTVG. Residues 419–433 show a composition bias toward low complexity; that stretch reads PSAQPQSKSVVQPQV. 2 stretches are compositionally biased toward polar residues: residues 435 to 453 and 462 to 473; these read PLTQPQLDPVAQPQSNTET and SASNPGEENSSG.

This sequence belongs to the G-protein coupled receptor 1 family.

The protein resides in the cell membrane. In terms of biological role, orphan receptor. This is Probable G-protein coupled receptor 152 (Gpr152) from Mus musculus (Mouse).